Consider the following 147-residue polypeptide: MRCPFCGHEDTQVAETRESDEGDVIRRRRRCPSCDKRFTTYERAELAMPAIVKKDGSRSEFDRSKIRASMMLALRKRPVSIDQVEAALGRIEEKMLATAANEVPSAKIGEMVMRELKKLDKVAYVRFASVYRSFEGVDEFSRLIKDI.

The segment at 3 to 34 (CPFCGHEDTQVAETRESDEGDVIRRRRRCPSC) is a zinc-finger region. Residues 49-139 (PAIVKKDGSR…VYRSFEGVDE (91 aa)) enclose the ATP-cone domain.

It belongs to the NrdR family. Requires Zn(2+) as cofactor.

Functionally, negatively regulates transcription of bacterial ribonucleotide reductase nrd genes and operons by binding to NrdR-boxes. This Methylibium petroleiphilum (strain ATCC BAA-1232 / LMG 22953 / PM1) protein is Transcriptional repressor NrdR.